The primary structure comprises 216 residues: Neural cell adhesion molecule L1.2 (216 aa).

The Fibronectin type-III domain maps to 1 to 64 (EFFIHYLRKD…QTAGARVMEV (64 aa)). Residues 1 to 73 (EFFIHYLRKD…VKSGFVTESW (73 aa)) are Extracellular-facing. N-linked (GlcNAc...) asparagine glycosylation is found at Asn22 and Asn46. A helical transmembrane segment spans residues 74–94 (FIGLISALVLLLLVLLILCFI). Topologically, residues 95–216 (KRSKGGKYSV…GLPNSAALLD (122 aa)) are cytoplasmic. 2 disordered regions span residues 127 to 149 (YRSLESDNEEKRTASQPSLCEDS) and 173 to 216 (DESL…ALLD). The span at 128 to 139 (RSLESDNEEKRT) shows a compositional bias: basic and acidic residues.

The protein belongs to the immunoglobulin superfamily. L1/neurofascin/NgCAM family. Expressed in many postmitotic neurons in 16-36 hours embryos. Little or no expression in the olfactory placode, the anterior lateral line/acoustic ganglia complex, the posterior lateral line ganglion, late-developing hindbrain neurons and some Rohon-Beard cells in the spinal cord.

The protein localises to the cell membrane. It localises to the cell projection. Its subcellular location is the growth cone. Functionally, cell adhesion molecule with an important role in the development of the nervous system. Involved in neuron-neuron adhesion, neurite fasciculation, outgrowth of neurites, etc. Binds to axonin on neurons. This chain is Neural cell adhesion molecule L1.2 (nadl1.2), found in Danio rerio (Zebrafish).